We begin with the raw amino-acid sequence, 179 residues long: ATP synthase subunit delta (179 aa).

The protein belongs to the ATPase delta chain family. As to quaternary structure, F-type ATPases have 2 components, F(1) - the catalytic core - and F(0) - the membrane proton channel. F(1) has five subunits: alpha(3), beta(3), gamma(1), delta(1), epsilon(1). F(0) has three main subunits: a(1), b(2) and c(10-14). The alpha and beta chains form an alternating ring which encloses part of the gamma chain. F(1) is attached to F(0) by a central stalk formed by the gamma and epsilon chains, while a peripheral stalk is formed by the delta and b chains.

The protein localises to the cell inner membrane. In terms of biological role, f(1)F(0) ATP synthase produces ATP from ADP in the presence of a proton or sodium gradient. F-type ATPases consist of two structural domains, F(1) containing the extramembraneous catalytic core and F(0) containing the membrane proton channel, linked together by a central stalk and a peripheral stalk. During catalysis, ATP synthesis in the catalytic domain of F(1) is coupled via a rotary mechanism of the central stalk subunits to proton translocation. Functionally, this protein is part of the stalk that links CF(0) to CF(1). It either transmits conformational changes from CF(0) to CF(1) or is implicated in proton conduction. This is ATP synthase subunit delta from Anaeromyxobacter dehalogenans (strain 2CP-C).